We begin with the raw amino-acid sequence, 256 residues long: Protein FixA (256 aa).

The protein belongs to the ETF beta-subunit/FixA family. As to quaternary structure, heterodimer of FixA and FixB.

Its pathway is amine and polyamine metabolism; carnitine metabolism. In terms of biological role, required for anaerobic carnitine reduction. May bring reductant to CaiA. This is Protein FixA from Escherichia coli O81 (strain ED1a).